The following is a 168-amino-acid chain: 2-C-methyl-D-erythritol 2,4-cyclodiphosphate synthase (168 aa).

D13 and H15 together coordinate a divalent metal cation. 4-CDP-2-C-methyl-D-erythritol 2-phosphate contacts are provided by residues 13–15 (DVH) and 39–40 (HS). H47 is an a divalent metal cation binding site. 4-CDP-2-C-methyl-D-erythritol 2-phosphate-binding positions include 61 to 63 (DIG), 66 to 70 (FPDTD), F144, and K147.

Belongs to the IspF family. In terms of assembly, homotrimer. A divalent metal cation serves as cofactor.

It carries out the reaction 4-CDP-2-C-methyl-D-erythritol 2-phosphate = 2-C-methyl-D-erythritol 2,4-cyclic diphosphate + CMP. The protein operates within isoprenoid biosynthesis; isopentenyl diphosphate biosynthesis via DXP pathway; isopentenyl diphosphate from 1-deoxy-D-xylulose 5-phosphate: step 4/6. Involved in the biosynthesis of isopentenyl diphosphate (IPP) and dimethylallyl diphosphate (DMAPP), two major building blocks of isoprenoid compounds. Catalyzes the conversion of 4-diphosphocytidyl-2-C-methyl-D-erythritol 2-phosphate (CDP-ME2P) to 2-C-methyl-D-erythritol 2,4-cyclodiphosphate (ME-CPP) with a corresponding release of cytidine 5-monophosphate (CMP). The protein is 2-C-methyl-D-erythritol 2,4-cyclodiphosphate synthase of Cupriavidus metallidurans (strain ATCC 43123 / DSM 2839 / NBRC 102507 / CH34) (Ralstonia metallidurans).